The chain runs to 446 residues: Probable glycine dehydrogenase (decarboxylating) subunit 1 (446 aa).

Belongs to the GcvP family. N-terminal subunit subfamily. In terms of assembly, the glycine cleavage system is composed of four proteins: P, T, L and H. In this organism, the P 'protein' is a heterodimer of two subunits.

The catalysed reaction is N(6)-[(R)-lipoyl]-L-lysyl-[glycine-cleavage complex H protein] + glycine + H(+) = N(6)-[(R)-S(8)-aminomethyldihydrolipoyl]-L-lysyl-[glycine-cleavage complex H protein] + CO2. The glycine cleavage system catalyzes the degradation of glycine. The P protein binds the alpha-amino group of glycine through its pyridoxal phosphate cofactor; CO(2) is released and the remaining methylamine moiety is then transferred to the lipoamide cofactor of the H protein. This chain is Probable glycine dehydrogenase (decarboxylating) subunit 1, found in Methylocella silvestris (strain DSM 15510 / CIP 108128 / LMG 27833 / NCIMB 13906 / BL2).